We begin with the raw amino-acid sequence, 660 residues long: Pescadillo homolog (660 aa).

Disordered stretches follow at residues 313–358 and 471–660; these read VESD…SYSS and PELY…EKKA. A compositionally biased stretch (basic and acidic residues) spans 331–342; sequence EEKPSDAIDKFE. A BRCT domain is found at 360 to 476; the sequence is DPAQLFSRLT…ELKSPELYGP (117 aa). Residues 501-659 adopt a coiled-coil conformation; sequence LEEQQSEGEA…KRRRLEKEKK (159 aa). A compositionally biased stretch (acidic residues) spans 504 to 566; that stretch reads QQSEGEAIDA…EEGSEDEEES (63 aa). A compositionally biased stretch (basic and acidic residues) spans 584–619; sequence VKGDKKMDAKTKAKLEAKKALERKKKSEAEDLERAK.

Belongs to the pescadillo family. In terms of assembly, component of the NOP7 complex, composed of ERB1, NOP7 and YTM1. The complex is held together by ERB1, which interacts with NOP7 via its N-terminal domain and with YTM1 via a high-affinity interaction between the seven-bladed beta-propeller domains of the 2 proteins. The NOP7 complex associates with the 66S pre-ribosome.

The protein resides in the nucleus. It is found in the nucleolus. The protein localises to the nucleoplasm. Component of the NOP7 complex, which is required for maturation of the 25S and 5.8S ribosomal RNAs and formation of the 60S ribosome. This is Pescadillo homolog from Chaetomium globosum (strain ATCC 6205 / CBS 148.51 / DSM 1962 / NBRC 6347 / NRRL 1970) (Soil fungus).